Consider the following 481-residue polypeptide: 6-phosphogluconate dehydrogenase, decarboxylating (481 aa).

NADP(+) contacts are provided by residues Gly-11–Gly-16, Asn-34–Thr-36, Val-76–Gly-78, and Asn-104. Substrate contacts are provided by residues Asn-104 and Ser-130–Gly-132. Lys-184 (proton acceptor) is an active-site residue. His-187–Asn-188 lines the substrate pocket. The active-site Proton donor is the Glu-191. Residues Tyr-192, Lys-259, Arg-286, Arg-445, and His-451 each contribute to the substrate site.

It belongs to the 6-phosphogluconate dehydrogenase family. In terms of assembly, homodimer.

The enzyme catalyses 6-phospho-D-gluconate + NADP(+) = D-ribulose 5-phosphate + CO2 + NADPH. The protein operates within carbohydrate degradation; pentose phosphate pathway; D-ribulose 5-phosphate from D-glucose 6-phosphate (oxidative stage): step 3/3. Its function is as follows. Catalyzes the oxidative decarboxylation of 6-phosphogluconate to ribulose 5-phosphate and CO(2), with concomitant reduction of NADP to NADPH. This is 6-phosphogluconate dehydrogenase, decarboxylating (Pgd) from Drosophila simulans (Fruit fly).